A 1380-amino-acid chain; its full sequence is DNA-directed RNA polymerase subunit beta (1380 aa).

Belongs to the RNA polymerase beta chain family. The RNAP catalytic core consists of 2 alpha, 1 beta, 1 beta' and 1 omega subunit. When a sigma factor is associated with the core the holoenzyme is formed, which can initiate transcription.

The enzyme catalyses RNA(n) + a ribonucleoside 5'-triphosphate = RNA(n+1) + diphosphate. Functionally, DNA-dependent RNA polymerase catalyzes the transcription of DNA into RNA using the four ribonucleoside triphosphates as substrates. The chain is DNA-directed RNA polymerase subunit beta from Ehrlichia ruminantium (strain Gardel).